Reading from the N-terminus, the 113-residue chain is MGEQNKLYYDVEKLVNSLQESFDLDCAQSVSLFTSKSRSNEAWLEELENKFKLKDDVELDDVENLRAEIDMKLNMLEDKVSYYERLYKELEEFQNEIKIKTVVNNRRQSRTPK.

A coiled-coil region spans residues 57–97 (VELDDVENLRAEIDMKLNMLEDKVSYYERLYKELEEFQNEI).

It belongs to the BLI1 family. As to quaternary structure, component of the biogenesis of lysosome-related organelles complex-1 (BLOC-1) composed of at least BLI1, BLS1, CNL1, KXD1, SNN1 and VAB2.

Its subcellular location is the endosome. Functionally, component of the biogenesis of lysosome-related organelles complex-1 (BLOC-1) involved in endosomal cargo sorting. The sequence is that of Biogenesis of lysosome-related organelles complex 1 subunit BLI1 (BLI1) from Saccharomyces cerevisiae (strain RM11-1a) (Baker's yeast).